Consider the following 192-residue polypeptide: 3-isopropylmalate dehydratase small subunit (192 aa).

Belongs to the LeuD family. LeuD type 1 subfamily. Heterodimer of LeuC and LeuD.

It catalyses the reaction (2R,3S)-3-isopropylmalate = (2S)-2-isopropylmalate. It participates in amino-acid biosynthesis; L-leucine biosynthesis; L-leucine from 3-methyl-2-oxobutanoate: step 2/4. Functionally, catalyzes the isomerization between 2-isopropylmalate and 3-isopropylmalate, via the formation of 2-isopropylmaleate. This chain is 3-isopropylmalate dehydratase small subunit, found in Oceanobacillus iheyensis (strain DSM 14371 / CIP 107618 / JCM 11309 / KCTC 3954 / HTE831).